We begin with the raw amino-acid sequence, 491 residues long: MDHTDNELQGTNSSGSLGGLDVRRRIPIKLISKQANKAKPAPRTQRTINRMPAKAPPGDEEGFDYNEEERYDCKGGELFANQRRFPGHLFWDFQINILGEKDDTPVHFCDKCGLPIKIYGRMIPCKHVFCYDCAILHEKKGDKMCPGCSDPVQRIEQCTRGSLFMCSIVQGCKRTYLSQRDLQAHINHRHMRAGKPVTRASLENVHPPIAPPPTEIPERFIMPPDKHHMSHIPPKQHIMMPPPPLQHVPHEHYNQPHEDIRAPPAELSMAPPPPRSVSQETFRISTRKHSNLITVPIQDDSNSGAREPPPPAPAPAHHHPEYQGQPVVSHPHHIMPPQQHYAPPPPPPPPISHPMPHPPQAAGTPHLVYSQAPPPPMTSAPPPITPPPGHIIAQMPPYMNHPPPGPPPPQHGGPPVTAPPPHHYNPNSLPQFTEDQGTLSPPFTQPGGMSPGIWPAPRGPPPPPRLQGPPSQTPLPGPHHPDQTRYRPYYQ.

The interval 1-61 (MDHTDNELQG…PAKAPPGDEE (61 aa)) is disordered. The RING-type zinc-finger motif lies at 109–149 (CDKCGLPIKIYGRMIPCKHVFCYDCAILHEKKGDKMCPGCS). Positions 148–206 (CSDPVQRIEQCTRGSLFMCSIVQGCKRTYLSQRDLQAHINHRHMRAGKPVTRASLENVH) are HYB domain. The segment at 164-190 (FMCSIVQGCKRTYLSQRDLQAHINHRH) adopts a C2H2-type zinc-finger fold. Phosphoserine occurs at positions 201, 285, and 290. The interval 255–491 (QPHEDIRAPP…DQTRYRPYYQ (237 aa)) is disordered. 3 stretches are compositionally biased toward pro residues: residues 342-359 (APPP…PHPP), 372-389 (APPP…PPPG), and 399-423 (MNHP…PPHH). Polar residues predominate over residues 427–442 (NSLPQFTEDQGTLSPP). Residues 457 to 478 (PRGPPPPPRLQGPPSQTPLPGP) are compositionally biased toward pro residues.

Belongs to the Hakai family. As to quaternary structure, homodimer. Interacts with tyrosine-phosphorylated SRC substrates. Component of the WMM complex, a N6-methyltransferase complex composed of a catalytic subcomplex, named MAC, and of an associated subcomplex, named MACOM. The MAC subcomplex is composed of METTL3 and METTL14. The MACOM subcomplex is composed of WTAP, ZC3H13, CBLL1/HAKAI, VIRMA, and, in some cases of RBM15 (RBM15 or RBM15B). Also a component of a MACOM-like complex, named WTAP complex, composed of WTAP, ZC3H13, CBLL1, VIRMA, RBM15, BCLAF1 and THRAP3. Post-translationally, phosphorylated on tyrosine residues.

The protein localises to the nucleus speckle. It is found in the nucleus. Its subcellular location is the nucleoplasm. The protein resides in the cytoplasm. It catalyses the reaction S-ubiquitinyl-[E2 ubiquitin-conjugating enzyme]-L-cysteine + [acceptor protein]-L-lysine = [E2 ubiquitin-conjugating enzyme]-L-cysteine + N(6)-ubiquitinyl-[acceptor protein]-L-lysine.. It participates in protein modification; protein ubiquitination. E3 ubiquitin-protein ligase that mediates ubiquitination of several tyrosine-phosphorylated Src substrates, including CDH1, CTTN and DOK1. Targets CDH1 for endocytosis and degradation. Associated component of the WMM complex, a complex that mediates N6-methyladenosine (m6A) methylation of RNAs, a modification that plays a role in the efficiency of mRNA splicing and RNA processing. Its function in the WMM complex is unknown. The polypeptide is E3 ubiquitin-protein ligase Hakai (Homo sapiens (Human)).